The sequence spans 232 residues: BTB/POZ domain-containing protein KCTD11 (232 aa).

The region spanning Met-1–Leu-49 is the BTB domain.

In terms of assembly, homopentamer. Interacts with KCTD6 and KCTD21; KCTD11 and KCTD6 or KCTD21 may associate in pentameric assemblies. Component of the BCR(KCTD11) E3 ubiquitin ligase complex, at least composed of CUL3 and KCTD11 and RBX1. Interacts (via BTB domain) with CUL3; initially a 4:4 stoichiometry has been reported, however, electron microscopy revealed pentameric states of the BTB domain.

The protein operates within protein modification; protein ubiquitination. Functionally, plays a role as a marker and a regulator of neuronal differentiation; Up-regulated by a variety of neurogenic signals, such as retinoic acid, epidermal growth factor/EGF and NGFB/nerve growth factor. Induces apoptosis, growth arrest and the expression of cyclin-dependent kinase inhibitor CDKN1B. Plays a role as a tumor repressor and inhibits cell growth and tumorigenicity of medulloblastoma (MDB). Acts as a probable substrate-specific adapter for a BCR (BTB-CUL3-RBX1) E3 ubiquitin-protein ligase complex towards HDAC1. Functions as antagonist of the Hedgehog pathway on cell proliferation and differentiation by affecting the nuclear transfer of transcription factor GLI1, thus maintaining cerebellar granule cells in undifferentiated state, this effect probably occurs via HDAC1 down-regulation, keeping GLI1 acetylated and inactive. In Bos taurus (Bovine), this protein is BTB/POZ domain-containing protein KCTD11 (KCTD11).